The sequence spans 122 residues: Large ribosomal subunit protein uL14 (122 aa).

This sequence belongs to the universal ribosomal protein uL14 family. As to quaternary structure, part of the 50S ribosomal subunit. Forms a cluster with proteins L3 and L19. In the 70S ribosome, L14 and L19 interact and together make contacts with the 16S rRNA in bridges B5 and B8.

Binds to 23S rRNA. Forms part of two intersubunit bridges in the 70S ribosome. The protein is Large ribosomal subunit protein uL14 of Rickettsia canadensis (strain McKiel).